The sequence spans 627 residues: MSATQKNNITRLEQLDRQSTQPFPNSRKVYLTGSRPDIRVPVREISLADTPTAFGGEKNPPVFVYDTSGPYTDPEVRIDLRKGLPDVRSRWIDERGDTEILPGLTSEFGQARLADASLDALRFAHVRTPRRAKPGANVSQMHYAKKGIITPEMEYIAIRENMKLQEARAAGLLDQQHPGHSFGANTPKEITPEFVREEVARGRAIIPANINHTELEPMIIGRNFLVKINGNIGNSALGSSIEEEVEKLTWGIRWGADTVMDLSTGKHIHETREWILRNSPVPIGTVPIYQALEKVNGVAEDLTWEIFRDTLIEQAEQGVDYFTIHAGVLLRYVPLTAKRVTGIVSRGGSIMAKWCLAHHQENFLYTHFEEICEIMKAYDVSFSLGDGLRPGSVADANDAAQFGELETLGELTKIAWKHDVQVMIEGPGHVPMQLIKENMDKQLECCDEAPFYTLGPLTTDIAPGYDHITSGIGAAMIGWFGCAMLCYVTPKEHLGLPNKDDVKTGIITYKIAAHAADLAKGHPGAQIRDNALSKARFEFRWEDQFNLGLDPDTARAFHDETLPKDSAKVAHFCSMCGPKFCSMKITQEVRDYAKENGLSDESKAIEAGFQEQAARFKDEGSVIYRQV.

Over residues 1–24 the composition is skewed to polar residues; sequence MSATQKNNITRLEQLDRQSTQPFP. The tract at residues 1–29 is disordered; that stretch reads MSATQKNNITRLEQLDRQSTQPFPNSRKV. Residues N231, M260, Y289, H325, 345-347, 386-389, and E425 each bind substrate; these read SRG and DGLR. Position 429 (H429) interacts with Zn(2+). Y452 contributes to the substrate binding site. Zn(2+) is bound at residue H493. 3 residues coordinate [4Fe-4S] cluster: C573, C576, and C581.

The protein belongs to the ThiC family. In terms of assembly, homodimer. [4Fe-4S] cluster serves as cofactor.

It catalyses the reaction 5-amino-1-(5-phospho-beta-D-ribosyl)imidazole + S-adenosyl-L-methionine = 4-amino-2-methyl-5-(phosphooxymethyl)pyrimidine + CO + 5'-deoxyadenosine + formate + L-methionine + 3 H(+). It functions in the pathway cofactor biosynthesis; thiamine diphosphate biosynthesis. Its function is as follows. Catalyzes the synthesis of the hydroxymethylpyrimidine phosphate (HMP-P) moiety of thiamine from aminoimidazole ribotide (AIR) in a radical S-adenosyl-L-methionine (SAM)-dependent reaction. The protein is Phosphomethylpyrimidine synthase of Pseudomonas aeruginosa (strain UCBPP-PA14).